We begin with the raw amino-acid sequence, 127 residues long: Small ribosomal subunit protein uS13 (127 aa).

A disordered region spans residues 95-127 (GLPLRGQRTKTNARTRRGKKGAAIGGKKKATKK).

The protein belongs to the universal ribosomal protein uS13 family. In terms of assembly, part of the 30S ribosomal subunit. Forms a loose heterodimer with protein S19. Forms two bridges to the 50S subunit in the 70S ribosome.

Located at the top of the head of the 30S subunit, it contacts several helices of the 16S rRNA. In the 70S ribosome it contacts the 23S rRNA (bridge B1a) and protein L5 of the 50S subunit (bridge B1b), connecting the 2 subunits; these bridges are implicated in subunit movement. Contacts the tRNAs in the A and P-sites. This Herpetosiphon aurantiacus (strain ATCC 23779 / DSM 785 / 114-95) protein is Small ribosomal subunit protein uS13.